The primary structure comprises 152 residues: UPF0178 protein YaiI (152 aa).

It belongs to the UPF0178 family.

The chain is UPF0178 protein YaiI from Escherichia coli O17:K52:H18 (strain UMN026 / ExPEC).